Reading from the N-terminus, the 447-residue chain is Argininosuccinate synthase (447 aa).

ATP-binding positions include 17–25 and Ala43; that span reads AFSGGLDTS. L-citrulline is bound at residue Tyr99. ATP contacts are provided by Gly129 and Thr131. L-aspartate-binding residues include Thr131, Asn135, and Asp136. Residue Asn135 coordinates L-citrulline. Residue Asp136 coordinates ATP. L-citrulline contacts are provided by Arg139 and Ser192. Position 194 (Asp194) interacts with ATP. L-citrulline contacts are provided by Thr201, Glu203, and Glu280.

Belongs to the argininosuccinate synthase family. Type 2 subfamily. Homotetramer.

It localises to the cytoplasm. It carries out the reaction L-citrulline + L-aspartate + ATP = 2-(N(omega)-L-arginino)succinate + AMP + diphosphate + H(+). Its pathway is amino-acid biosynthesis; L-arginine biosynthesis; L-arginine from L-ornithine and carbamoyl phosphate: step 2/3. The sequence is that of Argininosuccinate synthase from Escherichia coli O9:H4 (strain HS).